The primary structure comprises 185 residues: Ribosome-recycling factor (185 aa).

It belongs to the RRF family.

Its subcellular location is the cytoplasm. Functionally, responsible for the release of ribosomes from messenger RNA at the termination of protein biosynthesis. May increase the efficiency of translation by recycling ribosomes from one round of translation to another. In terms of biological role, plays a role in sporulation. In Bacillus subtilis (strain 168), this protein is Ribosome-recycling factor.